Reading from the N-terminus, the 1140-residue chain is Eukaryotic translation initiation factor 3 subunit A (1140 aa).

In terms of domain architecture, PCI spans 319 to 501 (LQRMAAHVLL…NSIYFGTDLT (183 aa)). Composition is skewed to basic and acidic residues over residues 588–623 (QNNA…EERE) and 829–899 (AAEE…RGGD). Disordered regions lie at residues 588–630 (QNNA…HQNE) and 829–1140 (AAEE…VKRR). Residue serine 908 is modified to Phosphoserine. 4 stretches are compositionally biased toward basic and acidic residues: residues 920–976 (ERND…EPDS), 990–1051 (SRDD…EPQR), 1059–1086 (DAPR…RGDQ), and 1109–1130 (TREE…KAGD).

It belongs to the eIF-3 subunit A family. As to quaternary structure, component of the eukaryotic translation initiation factor 3 (eIF-3) complex. The eIF-3 complex interacts with pix.

Its subcellular location is the cytoplasm. RNA-binding component of the eukaryotic translation initiation factor 3 (eIF-3) complex, which is involved in protein synthesis of a specialized repertoire of mRNAs and, together with other initiation factors, stimulates binding of mRNA and methionyl-tRNAi to the 40S ribosome. The eIF-3 complex specifically targets and initiates translation of a subset of mRNAs involved in cell proliferation. In Drosophila melanogaster (Fruit fly), this protein is Eukaryotic translation initiation factor 3 subunit A.